A 472-amino-acid chain; its full sequence is Carboxypeptidase Q (472 aa).

The first 20 residues, 1 to 20 (MKFLLFMFVGVVHLLPLASG), serve as a signal peptide directing secretion. Positions 21–44 (KAIYGNGPSQRTFQEIKEEIAHYG) are excised as a propeptide. Residues N52, N61, and N179 are each glycosylated (N-linked (GlcNAc...) asparagine). Residues H290 and D302 each coordinate Zn(2+). E336 (nucleophile) is an active-site residue. E337 is a Zn(2+) binding site. Residues N353 and N356 are each glycosylated (N-linked (GlcNAc...) asparagine). A Zn(2+)-binding site is contributed by D364. Residue N396 is glycosylated (N-linked (GlcNAc...) asparagine). H434 contacts Zn(2+).

Belongs to the peptidase M28 family. Homodimer. The monomeric form is inactive while the homodimer is active. In terms of processing, N-glycosylated. The secreted form is modified by hybrid or complex type oligosaccharide chains.

The protein resides in the endoplasmic reticulum. It is found in the golgi apparatus. It localises to the lysosome. Its subcellular location is the secreted. Carboxypeptidase that may play an important role in the hydrolysis of circulating peptides. Catalyzes the hydrolysis of dipeptides with unsubstituted terminals into amino acids. May play a role in the liberation of thyroxine hormone from its thyroglobulin (Tg) precursor. This chain is Carboxypeptidase Q (CPQ), found in Bos taurus (Bovine).